Consider the following 115-residue polypeptide: Large ribosomal subunit protein bL20 (115 aa).

This sequence belongs to the bacterial ribosomal protein bL20 family.

Functionally, binds directly to 23S ribosomal RNA and is necessary for the in vitro assembly process of the 50S ribosomal subunit. It is not involved in the protein synthesizing functions of that subunit. The polypeptide is Large ribosomal subunit protein bL20 (Prochlorococcus marinus (strain MIT 9215)).